The primary structure comprises 346 residues: MVLVHVGYLVLPVFGSVRNRGAPFQRSQHPHATSCRHFHLGPPQPQQLAPDFPLAHPVQSQPGLSAHMAPAHQHSGALHQSLTPLPTLQFQDVTGPSFLPQALHQQYLLQQQLLEAQHRRLVSHPRRSQERVSVHPHRLHPSFDFGQLQTPQPRYLAEGTDWDLSVDAGLSPAQFQVRPIPQHYQHYLATPRMHHFPRNSSSTQMVVHEIRNYPYPQLHFLALQGLNPSRHTSAVRESYEELLQLEDRLGNVTRGAVQNTIERFTFPHKYKKRRPQDGKGKKDEGEESDTDEKCTICLSMLEDGEDVRRLPCMHLFHQLCVDQWLAMSKKCPICRVDIETQLGADS.

2 disordered regions span residues 23-76 (PFQR…QHSG) and 267-288 (PHKY…GEES). Positions 266 to 268 (FPH) are ubiquitin binding. A compositionally biased stretch (basic and acidic residues) spans 275–284 (PQDGKGKKDE). Positions 294 and 297 each coordinate Zn(2+). Residues 294–335 (CTICLSMLEDGEDVRRLPCMHLFHQLCVDQWLAMSKKCPICR) form an RING-type; atypical zinc finger. The segment at 309-313 (RLPCM) is ubiquitin binding. Zn(2+) is bound by residues histidine 317 and cysteine 320.

Belongs to the Arkadia family. Monomer; binding to the ubiquitin-conjugating enzyme E2 does not trigger homodimerization.

The protein localises to the nucleus. The catalysed reaction is S-ubiquitinyl-[E2 ubiquitin-conjugating enzyme]-L-cysteine + [acceptor protein]-L-lysine = [E2 ubiquitin-conjugating enzyme]-L-cysteine + N(6)-ubiquitinyl-[acceptor protein]-L-lysine.. Binds free ubiquitin non-covalently via its RING-type zinc finger. Ubiquitin-binding leads to enhance the E3 ubiquitin-protein ligase activity by stabilizing the ubiquitin-conjugating enzyme E2 (donor ubiquitin) in the 'closed' conformation and activating ubiquitin transfer. Its function is as follows. E3 ubiquitin-protein ligase that acts as a regulator of motor axon elongation. Required for efficient motor axon extension in the dorsal forelimb by enhancing the transcriptional responses of the SMAD1/SMAD5/SMAD8 effectors, which are activated downstream of BMP. Acts by mediating ubiquitination and degradation of SMAD inhibitors such as SMAD6, SMAD7, SKI and SNON isoform of SKIL. The polypeptide is E3 ubiquitin-protein ligase ARK2C (Homo sapiens (Human)).